The chain runs to 224 residues: Myogenin (224 aa).

2 positions are modified to phosphoserine; by CaMK2G: Ser77 and Ser79. In terms of domain architecture, bHLH spans 81-132 (DRRRAATLREKRRLKKVNEAFEALKRSTLLNPNQRLPKVEILRSAIQYIERL). Thr87 is modified (phosphothreonine; by CaMK2G).

In terms of assembly, homodimer and heterodimer with E12; heterodimerization enhances MYOG DNA-binding and transcriptional activities. Interacts with SMARCA4/BRG1/BAF190A. Interacts (via C-terminal region) with SSRP1 and SUPT16H; the interaction is indicative of an interaction with the FACT complex. Interacts with CSRP3. In terms of processing, phosphorylated by CAMK2G on threonine and serine amino acids in a muscle activity-dependent manner. Phosphorylation of Thr-87 impairs both DNA-binding and trans-activation functions in contracting muscles.

The protein localises to the nucleus. Acts as a transcriptional activator that promotes transcription of muscle-specific target genes and plays a role in muscle differentiation, cell cycle exit and muscle atrophy. Essential for the development of functional embryonic skeletal fiber muscle differentiation. However is dispensable for postnatal skeletal muscle growth; phosphorylation by CAMK2G inhibits its transcriptional activity in respons to muscle activity. Required for the recruitment of the FACT complex to muscle-specific promoter regions, thus promoting gene expression initiation. During terminal myoblast differentiation, plays a role as a strong activator of transcription at loci with an open chromatin structure previously initiated by MYOD1. Together with MYF5 and MYOD1, co-occupies muscle-specific gene promoter core regions during myogenesis. Also cooperates with myocyte-specific enhancer factor MEF2D and BRG1-dependent recruitment of SWI/SNF chromatin-remodeling enzymes to alter chromatin structure at myogenic late gene promoters. Facilitates cell cycle exit during terminal muscle differentiation through the up-regulation of miR-20a expression, which in turn represses genes involved in cell cycle progression. Binds to the E-box containing (E1) promoter region of the miR-20a gene. Also plays a role in preventing reversal of muscle cell differentiation. Contributes to the atrophy-related gene expression in adult denervated muscles. Induces fibroblasts to differentiate into myoblasts. The polypeptide is Myogenin (MYOG) (Bos taurus (Bovine)).